The sequence spans 336 residues: tRNA dimethylallyltransferase (336 aa).

Residue 19-26 (GPTASGKT) participates in ATP binding. Substrate is bound at residue 21–26 (TASGKT).

It belongs to the IPP transferase family. As to quaternary structure, monomer. The cofactor is Mg(2+).

It carries out the reaction adenosine(37) in tRNA + dimethylallyl diphosphate = N(6)-dimethylallyladenosine(37) in tRNA + diphosphate. Catalyzes the transfer of a dimethylallyl group onto the adenine at position 37 in tRNAs that read codons beginning with uridine, leading to the formation of N6-(dimethylallyl)adenosine (i(6)A). The chain is tRNA dimethylallyltransferase from Bifidobacterium adolescentis (strain ATCC 15703 / DSM 20083 / NCTC 11814 / E194a).